Reading from the N-terminus, the 59-residue chain is UPF0391 membrane protein AZC_4184 (59 aa).

2 consecutive transmembrane segments (helical) span residues 4-24 (WALTFLVVAIIAAVLGFTAVA) and 30-50 (IAKIIFYVAIVLFLISAVMGF).

This sequence belongs to the UPF0391 family.

Its subcellular location is the cell membrane. This Azorhizobium caulinodans (strain ATCC 43989 / DSM 5975 / JCM 20966 / LMG 6465 / NBRC 14845 / NCIMB 13405 / ORS 571) protein is UPF0391 membrane protein AZC_4184.